A 278-amino-acid chain; its full sequence is Truncated FRIGIDA-like protein 1 (278 aa).

The stretch at 1–36 forms a coiled coil; that stretch reads MTASETIATAINQIDEKKEKLKKAFDDLQAHRSLLS.

The protein belongs to the Frigida family.

Truncated inactive FRIGIDA-like 1 protein. This Arabidopsis thaliana (Mouse-ear cress) protein is Truncated FRIGIDA-like protein 1 (FRL1).